A 441-amino-acid chain; its full sequence is Membrane protein PB1A10.07c (441 aa).

The next 11 helical transmembrane spans lie at 1 to 21 (MGAVLSIPLALASSLSGVVGI), 41 to 61 (VGAVISYAVLYFVNSLLSWCM), 97 to 117 (LSFTLVMFHLFLAFILSLCNT), 128 to 148 (GLWPFKIVLWFVLGIFSFFIP), 158 to 178 (IISVMGSALFIVYGLMLLVDF), 206 to 226 (TVGMYVVGLVLTILTYVFFCA), 235 to 255 (INTINLLLCIAVSCLSVHPTI), 263 to 283 (GLAQSSMVMCYTCYLILSALA), 307 to 327 (VIGAAFTFFTILYSAVRAASS), 364 to 384 (YNFIWFHIVFVLAAFYTASLL), and 415 to 435 (IITSWVCHGLYVWSCLAPVFF).

It belongs to the TDE1 family.

It localises to the membrane. The chain is Membrane protein PB1A10.07c from Schizosaccharomyces pombe (strain 972 / ATCC 24843) (Fission yeast).